Here is a 445-residue protein sequence, read N- to C-terminus: Selenocysteine lyase (445 aa).

N-acetylmethionine is present on Met-1. The interval 1–28 (MEAAVAPGRDAPAPAASQPSGCGKHNSP) is disordered. A Phosphoserine modification is found at Ser-129. Lys-259 bears the N6-(pyridoxal phosphate)lysine mark. Cys-388 acts as the S-selanylcysteine intermediate in catalysis.

It belongs to the class-V pyridoxal-phosphate-dependent aminotransferase family. In terms of assembly, homodimer. Requires pyridoxal 5'-phosphate as cofactor.

Its subcellular location is the cytoplasm. The protein localises to the cytosol. It catalyses the reaction L-selenocysteine + AH2 = hydrogenselenide + L-alanine + A + H(+). Functionally, catalyzes the decomposition of L-selenocysteine to L-alanine and elemental selenium. In Homo sapiens (Human), this protein is Selenocysteine lyase (SCLY).